The following is a 182-amino-acid chain: NADH-quinone oxidoreductase subunit I (182 aa).

4Fe-4S ferredoxin-type domains are found at residues 52 to 82 (LTRD…LQKA) and 92 to 121 (DFFR…LTPD). The [4Fe-4S] cluster site is built by C62, C65, C68, C72, C101, C104, C107, and C111.

It belongs to the complex I 23 kDa subunit family. As to quaternary structure, NDH-1 is composed of 13 different subunits. Subunits NuoA, H, J, K, L, M, N constitute the membrane sector of the complex. [4Fe-4S] cluster serves as cofactor.

It localises to the cell inner membrane. It catalyses the reaction a quinone + NADH + 5 H(+)(in) = a quinol + NAD(+) + 4 H(+)(out). In terms of biological role, NDH-1 shuttles electrons from NADH, via FMN and iron-sulfur (Fe-S) centers, to quinones in the respiratory chain. The immediate electron acceptor for the enzyme in this species is believed to be ubiquinone. Couples the redox reaction to proton translocation (for every two electrons transferred, four hydrogen ions are translocated across the cytoplasmic membrane), and thus conserves the redox energy in a proton gradient. This Pseudomonas syringae pv. syringae (strain B728a) protein is NADH-quinone oxidoreductase subunit I.